We begin with the raw amino-acid sequence, 126 residues long: Phosphoribosyl-AMP cyclohydrolase (126 aa).

D74 serves as a coordination point for Mg(2+). C75 is a Zn(2+) binding site. Residues D76 and D78 each coordinate Mg(2+). Residues C92 and C99 each coordinate Zn(2+).

Belongs to the PRA-CH family. As to quaternary structure, homodimer. It depends on Mg(2+) as a cofactor. Zn(2+) serves as cofactor.

The protein resides in the cytoplasm. It carries out the reaction 1-(5-phospho-beta-D-ribosyl)-5'-AMP + H2O = 1-(5-phospho-beta-D-ribosyl)-5-[(5-phospho-beta-D-ribosylamino)methylideneamino]imidazole-4-carboxamide. The protein operates within amino-acid biosynthesis; L-histidine biosynthesis; L-histidine from 5-phospho-alpha-D-ribose 1-diphosphate: step 3/9. Functionally, catalyzes the hydrolysis of the adenine ring of phosphoribosyl-AMP. This is Phosphoribosyl-AMP cyclohydrolase from Geotalea daltonii (strain DSM 22248 / JCM 15807 / FRC-32) (Geobacter daltonii).